The following is a 238-amino-acid chain: Ribonuclease PH (238 aa).

Phosphate-binding positions include Arg-86 and 124-126 (GTR).

It belongs to the RNase PH family. In terms of assembly, homohexameric ring arranged as a trimer of dimers.

It catalyses the reaction tRNA(n+1) + phosphate = tRNA(n) + a ribonucleoside 5'-diphosphate. Phosphorolytic 3'-5' exoribonuclease that plays an important role in tRNA 3'-end maturation. Removes nucleotide residues following the 3'-CCA terminus of tRNAs; can also add nucleotides to the ends of RNA molecules by using nucleoside diphosphates as substrates, but this may not be physiologically important. Probably plays a role in initiation of 16S rRNA degradation (leading to ribosome degradation) during starvation. The chain is Ribonuclease PH from Caulobacter vibrioides (strain ATCC 19089 / CIP 103742 / CB 15) (Caulobacter crescentus).